Consider the following 278-residue polypeptide: Probable velvet family sexual development regulator SCHCODRAFT_28806 (278 aa).

A Velvet domain is found at 51 to 255 (GRTIRASLDE…ARVGVRLSVR (205 aa)). A disordered region spans residues 257 to 278 (TGKKATTKRRKRSDSFDEDDSS).

The protein belongs to the velvet family.

The protein resides in the nucleus. In terms of biological role, velvet-domain-containing protein that probably acts as a positive regulator of sexual development. In Schizophyllum commune (strain H4-8 / FGSC 9210) (Split gill fungus), this protein is Probable velvet family sexual development regulator SCHCODRAFT_28806.